The chain runs to 237 residues: Phosphoribosylaminoimidazole-succinocarboxamide synthase (237 aa).

Belongs to the SAICAR synthetase family.

It carries out the reaction 5-amino-1-(5-phospho-D-ribosyl)imidazole-4-carboxylate + L-aspartate + ATP = (2S)-2-[5-amino-1-(5-phospho-beta-D-ribosyl)imidazole-4-carboxamido]succinate + ADP + phosphate + 2 H(+). It participates in purine metabolism; IMP biosynthesis via de novo pathway; 5-amino-1-(5-phospho-D-ribosyl)imidazole-4-carboxamide from 5-amino-1-(5-phospho-D-ribosyl)imidazole-4-carboxylate: step 1/2. This chain is Phosphoribosylaminoimidazole-succinocarboxamide synthase, found in Erwinia tasmaniensis (strain DSM 17950 / CFBP 7177 / CIP 109463 / NCPPB 4357 / Et1/99).